The chain runs to 154 residues: Superoxide dismutase [Cu-Zn] (154 aa).

Lys19 is covalently cross-linked (Glycyl lysine isopeptide (Lys-Gly) (interchain with G-Cter in SUMO)). Phosphoserine occurs at positions 26 and 39. Glu43 is a binding site for Zn(2+). 3 residues coordinate Cu cation: His47, His49, and His64. Cys58 and Cys147 are joined by a disulfide. Residue His64 coordinates Zn(2+). Lys70 participates in a covalent cross-link: Glycyl lysine isopeptide (Lys-Gly) (interchain with G-Cter in SUMO). His72, His81, and Asp84 together coordinate Zn(2+). Ser99 and Ser117 each carry phosphoserine. His121 serves as a coordination point for Cu cation. Phosphothreonine is present on residues Thr132 and Thr138. Arg144 provides a ligand contact to substrate.

It belongs to the Cu-Zn superoxide dismutase family. As to quaternary structure, homodimer in holo form. In apo form, heterodimer with CCS1. Zinc-binding at 'His-16' of CCS1 and Glu-43 of apo-SOD1 is required for this heterodimerization. Cu cation serves as cofactor. It depends on Zn(2+) as a cofactor.

Its subcellular location is the cytoplasm. It is found in the mitochondrion intermembrane space. The catalysed reaction is 2 superoxide + 2 H(+) = H2O2 + O2. Functionally, destroys radicals which are normally produced within the cells and which are toxic to biological systems. The chain is Superoxide dismutase [Cu-Zn] from Saccharomyces cerevisiae (strain ATCC 204508 / S288c) (Baker's yeast).